A 515-amino-acid polypeptide reads, in one-letter code: Bifunctional purine biosynthesis protein PurH (515 aa).

In terms of domain architecture, MGS-like spans 1–145 (MTKRALISVS…KNHASVTVVV (145 aa)).

It belongs to the PurH family.

It carries out the reaction (6R)-10-formyltetrahydrofolate + 5-amino-1-(5-phospho-beta-D-ribosyl)imidazole-4-carboxamide = 5-formamido-1-(5-phospho-D-ribosyl)imidazole-4-carboxamide + (6S)-5,6,7,8-tetrahydrofolate. The catalysed reaction is IMP + H2O = 5-formamido-1-(5-phospho-D-ribosyl)imidazole-4-carboxamide. The protein operates within purine metabolism; IMP biosynthesis via de novo pathway; 5-formamido-1-(5-phospho-D-ribosyl)imidazole-4-carboxamide from 5-amino-1-(5-phospho-D-ribosyl)imidazole-4-carboxamide (10-formyl THF route): step 1/1. Its pathway is purine metabolism; IMP biosynthesis via de novo pathway; IMP from 5-formamido-1-(5-phospho-D-ribosyl)imidazole-4-carboxamide: step 1/1. The sequence is that of Bifunctional purine biosynthesis protein PurH from Streptococcus suis (strain 98HAH33).